The sequence spans 492 residues: Glutamyl-tRNA(Gln) amidotransferase subunit A (492 aa).

Active-site charge relay system residues include Lys78 and Ser158. The active-site Acyl-ester intermediate is Ser182.

The protein belongs to the amidase family. GatA subfamily. As to quaternary structure, heterotrimer of A, B and C subunits.

The enzyme catalyses L-glutamyl-tRNA(Gln) + L-glutamine + ATP + H2O = L-glutaminyl-tRNA(Gln) + L-glutamate + ADP + phosphate + H(+). Allows the formation of correctly charged Gln-tRNA(Gln) through the transamidation of misacylated Glu-tRNA(Gln) in organisms which lack glutaminyl-tRNA synthetase. The reaction takes place in the presence of glutamine and ATP through an activated gamma-phospho-Glu-tRNA(Gln). This Orientia tsutsugamushi (strain Boryong) (Rickettsia tsutsugamushi) protein is Glutamyl-tRNA(Gln) amidotransferase subunit A.